We begin with the raw amino-acid sequence, 413 residues long: MSMSRLSQQDPQVFQAIQDELKRQQTKIELIASENFVSEAVMEAQGSVLTNKYAEGYPGRRYYGGCEHVDVVEELARERAKQLFGAEHANVQPHSGAQANMAVYFTILQHGDTVLGMNLSHGGHLTHGSPVNFSGIQYNFIEYGVDPETHRINYDDVREKALKHKPKLIVAGASAYPRTIDFAKFREIADEVGAYFMVDMAHIAGLVAAGLHPNPVPYAHFVTTTTHKTLRGPRGGMILCQEQFAKQIDKAIFPGIQGGPLMHVIAAKAVALGEALQDDFKTYAQNIVNNAKRLAEALVAEGFTLVSGGTDNHLLLIDLRSIGLTGKVAEKVLDEIGITVNKNTIPYDPESPFVTSGIRIGTAAVTSRGFGLEEMDEIARIISIALKHKDDEQKLDEARRRVAALTEKFPLYV.

(6S)-5,6,7,8-tetrahydrofolate is bound by residues Leu119 and 123 to 125; that span reads GHL. Position 228 is an N6-(pyridoxal phosphate)lysine (Lys228). 351–353 is a binding site for (6S)-5,6,7,8-tetrahydrofolate; the sequence is SPF.

It belongs to the SHMT family. In terms of assembly, homodimer. Requires pyridoxal 5'-phosphate as cofactor.

The protein resides in the cytoplasm. The catalysed reaction is (6R)-5,10-methylene-5,6,7,8-tetrahydrofolate + glycine + H2O = (6S)-5,6,7,8-tetrahydrofolate + L-serine. The protein operates within one-carbon metabolism; tetrahydrofolate interconversion. It functions in the pathway amino-acid biosynthesis; glycine biosynthesis; glycine from L-serine: step 1/1. Catalyzes the reversible interconversion of serine and glycine with tetrahydrofolate (THF) serving as the one-carbon carrier. This reaction serves as the major source of one-carbon groups required for the biosynthesis of purines, thymidylate, methionine, and other important biomolecules. Also exhibits THF-independent aldolase activity toward beta-hydroxyamino acids, producing glycine and aldehydes, via a retro-aldol mechanism. This Anoxybacillus flavithermus (strain DSM 21510 / WK1) protein is Serine hydroxymethyltransferase.